Consider the following 162-residue polypeptide: Transcription antitermination protein RfaH (162 aa).

This sequence belongs to the RfaH family. In terms of assembly, interacts with both the nontemplate DNA and the RNA polymerase (RNAP).

In terms of biological role, enhances distal genes transcription elongation in a specialized subset of operons that encode extracytoplasmic components. RfaH is recruited into a multi-component RNA polymerase complex by the ops element, which is a short conserved DNA sequence located downstream of the main promoter of these operons. Once bound, RfaH suppresses pausing and inhibits Rho-dependent and intrinsic termination at a subset of sites. Termination signals are bypassed, which allows complete synthesis of long RNA chains. Also negatively controls expression and surface presentation of AG43 and possibly another AG43-independent factor that mediates cell-cell interactions and biofilm formation,. The sequence is that of Transcription antitermination protein RfaH from Escherichia coli O6:K15:H31 (strain 536 / UPEC).